We begin with the raw amino-acid sequence, 498 residues long: Cystathionine beta-synthase (498 aa).

The interval 1 to 25 (MSAPEGPSKCTWTPNTTENTPHTTR) is disordered. The span at 11-22 (TWTPNTTENTPH) shows a compositional bias: low complexity. An N6-(pyridoxal phosphate)lysine modification is found at K73. Pyridoxal 5'-phosphate-binding positions include N103, 210–214 (GTGGT), and S302. 2 CBS domains span residues 374–430 (TLPK…KKAV) and 435–497 (VSKV…SQQK).

Belongs to the cysteine synthase/cystathionine beta-synthase family. Pyridoxal 5'-phosphate serves as cofactor.

The enzyme catalyses L-homocysteine + L-serine = L,L-cystathionine + H2O. It functions in the pathway amino-acid biosynthesis; L-cysteine biosynthesis; L-cysteine from L-homocysteine and L-serine: step 1/2. This is Cystathionine beta-synthase (cysB) from Dictyostelium discoideum (Social amoeba).